We begin with the raw amino-acid sequence, 148 residues long: 3-dehydroquinate dehydratase 2 (148 aa).

Catalysis depends on Tyr-24, which acts as the Proton acceptor. Substrate contacts are provided by Asn-75, His-81, and Asp-88. His-101 (proton donor) is an active-site residue. Substrate is bound by residues Leu-102–Ser-103 and Arg-112.

This sequence belongs to the type-II 3-dehydroquinase family. Homododecamer.

It catalyses the reaction 3-dehydroquinate = 3-dehydroshikimate + H2O. The protein operates within metabolic intermediate biosynthesis; chorismate biosynthesis; chorismate from D-erythrose 4-phosphate and phosphoenolpyruvate: step 3/7. Its function is as follows. Catalyzes a trans-dehydration via an enolate intermediate. This is 3-dehydroquinate dehydratase 2 (aroQ2) from Pseudomonas aeruginosa (strain ATCC 15692 / DSM 22644 / CIP 104116 / JCM 14847 / LMG 12228 / 1C / PRS 101 / PAO1).